Consider the following 216-residue polypeptide: Twisted gastrulation protein homolog 1-A (216 aa).

Positions 1-25 (MKPSFLHIPAAALLLCSLWILPIYC) are cleaved as a signal peptide. N52, N81, and N145 each carry an N-linked (GlcNAc...) asparagine glycan.

The protein belongs to the twisted gastrulation protein family. In terms of assembly, binds directly to bmp2, bmp4 and bmp7 and can form a ternary complex with bmps and chordin, thus preventing the binding of bmps to their cell surface receptors. As to expression, posterior defects are induced by overexpression. This may arise through alteration of bmp4 or chrd function in the developing tailbud region.

Its subcellular location is the secreted. Its function is as follows. Involved in dorsal-ventral patterning, permitting peak BMP signaling by antagonizing the residual anti-BMP activity of the cleavage products of chrd. Functions to promote the formation of ventral mesoderm by increasing the activity of bmp7 and other BMPS. Seems to antagonize BMP signaling by forming ternary complexes with chrd and BMPs, thereby preventing BMPs from binding to their receptors. In addition to the anti-BMP function, also has pro-BMP activity, partly mediated by cleavage and degradation of chrd, which releases BMPs from ternary complexes. May be an important modulator of BMP-regulated cartilage development and chondrocyte differentiation. This is Twisted gastrulation protein homolog 1-A (twsg1-a) from Xenopus laevis (African clawed frog).